A 2282-amino-acid chain; its full sequence is Protein Ycf2 (2282 aa).

An ATP-binding site is contributed by 1635-1642 (GSIGTGRS).

The protein belongs to the Ycf2 family.

The protein resides in the plastid. Its subcellular location is the chloroplast stroma. Its function is as follows. Probable ATPase of unknown function. Its presence in a non-photosynthetic plant (Epifagus virginiana) and experiments in tobacco indicate that it has an essential function which is probably not related to photosynthesis. In Populus alba (White poplar), this protein is Protein Ycf2.